A 636-amino-acid chain; its full sequence is MSHASKNYNAQLTAAAASTALHGTKKIYNSNENDRAVNSFLGNRTSYGEAVNGSPQYDYMRSRMSTLGSANQPMAPPSLRNRSSVYLPTPAGPPQIPVNTGKRYTLTSSSANYMTKSERQMRPPKSYDFPPSQQVRPSTSRSPSYASYNSEEVNFQSYQDPRLLPRTSQMYMPDNNYSPAVKSPAAQRRSSSYMVPANSRGSPANYNTPYYPTAIPPPIEEYSPSVSLPTSPVAEESYNNVQRSSTVRNNTTQKSVLKKPSRKMSPAYTSSYRQNSPSSQVPPVSKKHVIIYENKEGSSSSESVYEDVFEDFDPSGSNQASLRSTSTIHYTPSSKRISVIPPNTSNIGSRVVSRSGQNNNQPAQPGQYNQQSQPVQSYQSGQSTQHFQPVQPIQPVQSTQYYQPSSPVQPVQNGVPAPPMQPVQSTQYYQPSSPVQPVQNVKPAQPAQPSLEDAAKRRVEEMLRQMDITPTASSTTANNAYASAEPHPSAFPDDMNSVFSDSSFERERDSGRGRSTNLFSKFKSGRSRSKASGEAPYSYPAPPVPSVNNAGARLTLRDSGAAPEATYSLRQPSNHAYSEGRSYTFTGGQPPSVPTMPYGSRFANDSDSMMGSTADFSSKKKGGKFKAFKKFFKMRF.

A required for targeting the protein to eisosomes region spans residues 1–297; it reads MSHASKNYNA…HVIIYENKEG (297 aa). 6 disordered regions span residues 111–205, 222–284, 313–387, 400–451, 467–550, and 572–604; these read ANYM…SPAN, YSPS…VPPV, DPSG…TQHF, QYYQ…QPSL, DITP…VNNA, and PSNH…RFAN. Polar residues-rich tracts occupy residues 131 to 159, 166 to 178, 188 to 204, 237 to 255, and 315 to 354; these read PSQQ…QSYQ, RTSQ…NNYS, RRSS…GSPA, SYNN…TQKS, and SGSN…VVSR. Over residues 355–383 the composition is skewed to low complexity; sequence SGQNNNQPAQPGQYNQQSQPVQSYQSGQS. Composition is skewed to polar residues over residues 400–412 and 422–439; these read QYYQ…QPVQ and PVQS…QPVQ. Positions 471–484 are enriched in low complexity; it reads TASSTTANNAYASA. Basic and acidic residues predominate over residues 503 to 512; that stretch reads SFERERDSGR. Residues 572–589 are compositionally biased toward polar residues; the sequence is PSNHAYSEGRSYTFTGGQ.

In terms of assembly, component of eisosomes, large cytoplasmic protein assemblies that localize to specialized domains termed MCCs on the plasma membrane.

The protein resides in the cytoplasm. It is found in the cell cortex. It localises to the cell tip. In terms of biological role, important for the biogenesis of filamentous eisosomes, large cytoplasmic protein assemblies that localize to specialized domains on the plasma membrane to cluster specific proteins at sites of membrane invaginations. The chain is Eisosome protein sle1 (sle1) from Schizosaccharomyces pombe (strain 972 / ATCC 24843) (Fission yeast).